We begin with the raw amino-acid sequence, 63 residues long: AASDCCSACICDRRAPPYFECTCGDTFDHCPAACNKCVCTRSIPPQCRCTDRTQGRCPLTPCA.

Cystine bridges form between cysteine 5–cysteine 62, cysteine 6–cysteine 23, cysteine 9–cysteine 57, cysteine 11–cysteine 21, cysteine 30–cysteine 37, cysteine 34–cysteine 49, and cysteine 39–cysteine 47.

This sequence belongs to the Bowman-Birk serine protease inhibitor family.

This is Bowman-Birk type proteinase inhibitor B-II from Arachis hypogaea (Peanut).